Reading from the N-terminus, the 249-residue chain is General transcription factor IIF subunit 2 (249 aa).

The residue at position 2 (A2) is an N-acetylalanine. An N6-acetyllysine mark is found at K22, K33, and K137. A Phosphoserine modification is found at S142. DNA contacts are provided by G227 and H229. A Phosphoserine modification is found at S248.

It belongs to the TFIIF beta subunit family. In terms of assembly, heterodimer of an alpha and a beta subunit. Interacts with HTATSF1 and URI1. Interacts with GPBP1. Interacts with GTF2B (via N-terminus); this interaction is inhibited in presence of GTF2F1. Part of TBP-based Pol II pre-initiation complex (PIC), in which Pol II core assembles with general transcription factors and other specific initiation factors including GTF2E1, GTF2E2, GTF2F1, GTF2F2, TCEA1, ERCC2, ERCC3, GTF2H2, GTF2H3, GTF2H4, GTF2H5, GTF2A1, GTF2A2, GTF2B and TBP; this large multi-subunit PIC complex mediates DNA unwinding and targets Pol II core to the transcription start site where the first phosphodiester bond forms.

It localises to the nucleus. TFIIF is a general transcription initiation factor that binds to RNA polymerase II and helps to recruit it to the initiation complex in collaboration with TFIIB. This Mus musculus (Mouse) protein is General transcription factor IIF subunit 2 (Gtf2f2).